We begin with the raw amino-acid sequence, 60 residues long: Toxin 5 (60 aa).

Cystine bridges form between cysteine 3–cysteine 22, cysteine 17–cysteine 39, cysteine 41–cysteine 52, and cysteine 53–cysteine 58.

This sequence belongs to the three-finger toxin family. Short-chain subfamily. Type I alpha-neurotoxin sub-subfamily. As to expression, expressed by the venom gland.

The protein resides in the secreted. Binds to muscle nicotinic acetylcholine receptor (nAChR) and inhibit acetylcholine from binding to the receptor, thereby impairing neuromuscular transmission. This Hydrophis schistosus (Beaked sea snake) protein is Toxin 5.